Here is a 307-residue protein sequence, read N- to C-terminus: Transcription initiation factor IIB (307 aa).

A TFIIB-type zinc finger spans residues 11-42 (FTEECPACGSAEIVFDEERGEYVCANCGLVTE). Residues Cys15, Cys18, Cys34, and Cys37 each contribute to the Zn(2+) site. The disordered stretch occupies residues 48–69 (PGPEWRHFNPDQRQRRSRTGEP). The segment covering 50-69 (PEWRHFNPDQRQRRSRTGEP) has biased composition (basic and acidic residues). A run of 2 repeats spans residues 123–207 (LELE…QRRL) and 218–299 (DHLP…EICE).

Belongs to the TFIIB family.

Its function is as follows. Stabilizes TBP binding to an archaeal box-A promoter. Also responsible for recruiting RNA polymerase II to the pre-initiation complex (DNA-TBP-TFIIB). This chain is Transcription initiation factor IIB, found in Methanopyrus kandleri (strain AV19 / DSM 6324 / JCM 9639 / NBRC 100938).